A 762-amino-acid chain; its full sequence is MPRSPGTRLKPAKYIPVATAAALLVGSSTLFFVFTCPWLTRAVSPAIPVYNGILFLFVLANFSMATFMDPGVFPRADEDEDKEDDFRAPLYKNVDVRGIQVRMKWCATCHFYRPPRCSHCSVCDNCVEDFDHHCPWVNNCIGRRNYRYFFLFLLSLSAHMVGVVAFGLLYVLNHSEGLGAAHTTITMAVMCVAGLFFIPVIGLTGFHVVLVTRGRTTNEQVTGKFRGGVNPFTRGCYGNVEHVLCSPLAPRYVVEPPRMPLSVSLKPPFLRPELLERAVPLKVKLSDNGLKAGRSKSKGSLDQLDEKPLDLGPPLPPKIEAGTFGRDLKTPRPGSAESALSVQRTSPPTPAMYKFRPAFSTGPKTPFCGPNEQVPGPDSLTLADDSTHSLDFVSEPSLDLPDHGPGGLRPPYPPSPPLNTTDAFSGALRSLSLKAASRRGGDHMTLQPLRSEGGPPTPHRSLFAPHALPNRNGSLSYDSLLNPGSPSGHACPTHPSVGIASYHSPYLHPGPSDPPRPPPRSFSPVLGPRPREPSPVRYDNLSRTIMASIQERKDREERERLLRSQTDSLFGDSGVYDTPSSYSLQQASVLTEGPRGSVLRYGSRDDLVAGPGFGGARNPALQTSLSSLSSSMSRAPRTSSSSLQADQANNNAPGPRPGSGSHRSPARQGLPSPPGTPRSPSYTGSKAVAFIHTDLPDRQPSLAMQRDHPQLKTPPSKLNGQSPGMARLGPAASPMGPNASPARHTLVKKVSGVGGTTYEISV.

Residues 1-13 (MPRSPGTRLKPAK) are Cytoplasmic-facing. The helical transmembrane segment at 14 to 34 (YIPVATAAALLVGSSTLFFVF) threads the bilayer. The Lumenal segment spans residues 35–52 (TCPWLTRAVSPAIPVYNG). The helical transmembrane segment at 53–73 (ILFLFVLANFSMATFMDPGVF) threads the bilayer. At 74–148 (PRADEDEDKE…NCIGRRNYRY (75 aa)) the chain is on the cytoplasmic side. One can recognise a DHHC domain in the interval 104–154 (KWCATCHFYRPPRCSHCSVCDNCVEDFDHHCPWVNNCIGRRNYRYFFLFLL). The active-site S-palmitoyl cysteine intermediate is the C134. A helical membrane pass occupies residues 149-169 (FFLFLLSLSAHMVGVVAFGLL). The Lumenal segment spans residues 170 to 190 (YVLNHSEGLGAAHTTITMAVM). A helical membrane pass occupies residues 191 to 211 (CVAGLFFIPVIGLTGFHVVLV). The Cytoplasmic portion of the chain corresponds to 212-762 (TRGRTTNEQV…VGGTTYEISV (551 aa)). Disordered stretches follow at residues 289–350 (GLKA…PPTP), 362–423 (GPKT…TTDA), 436–537 (ASRR…SPVR), and 551–574 (ERKDREERERLLRSQTDSLFGDSG). Position 335 is a phosphoserine (S335). The span at 408–417 (LRPPYPPSPP) shows a compositional bias: pro residues. R439 carries the omega-N-methylarginine modification. The span at 471–485 (RNGSLSYDSLLNPGS) shows a compositional bias: polar residues. Pro residues predominate over residues 511 to 521 (PSDPPRPPPRS). A compositionally biased stretch (basic and acidic residues) spans 551 to 562 (ERKDREERERLL). S603 and S624 each carry phosphoserine. Over residues 626–644 (SSLSSSMSRAPRTSSSSLQ) the composition is skewed to low complexity. 2 disordered regions span residues 626-684 (SSLS…SYTG) and 707-744 (DHPQLKTPPSKLNGQSPGMARLGPAASPMGPNASPARH). Residues S672, S679, S722, and S740 each carry the phosphoserine modification.

Belongs to the DHHC palmitoyltransferase family. ERF2/ZDHHC9 subfamily. Expressed in brain cortex and hippocampus.

The protein localises to the golgi apparatus membrane. Its subcellular location is the mitochondrion membrane. It catalyses the reaction L-cysteinyl-[protein] + hexadecanoyl-CoA = S-hexadecanoyl-L-cysteinyl-[protein] + CoA. Its function is as follows. Palmitoyltransferase that catalyzes the addition of palmitate onto various protein substrates and therefore functions in several unrelated biological processes. Through the palmitoylation of ABCA1 regulates the localization of the transporter to the plasma membrane and thereby regulates its function in cholesterol and phospholipid efflux. Could also pamitoylate the D(2) dopamine receptor DRD2 and regulate its stability and localization to the plasma membrane. Could also play a role in glutamatergic transmission. The chain is Palmitoyltransferase ZDHHC8 from Mus musculus (Mouse).